Here is a 129-residue protein sequence, read N- to C-terminus: M-zodatoxin-Lt8e (129 aa).

Residues 1–20 form the signal peptide; it reads MKYFVVALALVAAFVCIAES. The propeptide occupies 21 to 60; sequence KPAESEHELAEVEEENELADLEDAVWLEHLADLSDLEEAR. A Processing quadruplet motif motif is present at residues 57–60; it reads EEAR.

Cleavage of the propeptide depends on the processing quadruplet motif (XXXR, with at least one of X being E). As to expression, expressed by the venom gland.

Its subcellular location is the secreted. Its function is as follows. Insecticidal, cytolytic and antimicrobial peptide. Forms voltage-dependent, ion-permeable channels in membranes. At high concentration causes cell membrane lysis. This chain is M-zodatoxin-Lt8e (cit 1-5), found in Lachesana tarabaevi (Spider).